A 495-amino-acid polypeptide reads, in one-letter code: Alpha-1B-glycoprotein (495 aa).

An N-terminal signal peptide occupies residues 1–21 (MSMLVVFLLLWGVTWGPVTEA). 5 consecutive Ig-like V-type domains span residues 22–113 (AIFY…LTGP), 114–206 (KSLP…ELAA), 207–299 (PPPP…PVEL), 300–397 (ILSD…LHVD), and 398–495 (GPPP…VAES). N-linked (GlcNAc...) (complex) asparagine glycosylation is present at Asn44. 5 disulfide bridges follow: Cys49/Cys93, Cys139/Cys182, Cys232/Cys279, Cys325/Cys374, and Cys423/Cys470. A glycan (N-linked (GlcNAc...) asparagine) is linked at Asn179. Residues Asn363 and Asn371 are each glycosylated (N-linked (GlcNAc...) asparagine).

In terms of assembly, interacts with CRISP3. As to expression, plasma.

Its subcellular location is the secreted. The sequence is that of Alpha-1B-glycoprotein (A1BG) from Homo sapiens (Human).